Reading from the N-terminus, the 291-residue chain is 33 kDa chaperonin (291 aa).

2 disulfides stabilise this stretch: cysteine 237-cysteine 239 and cysteine 270-cysteine 273.

This sequence belongs to the HSP33 family. In terms of processing, under oxidizing conditions two disulfide bonds are formed involving the reactive cysteines. Under reducing conditions zinc is bound to the reactive cysteines and the protein is inactive.

It localises to the cytoplasm. Functionally, redox regulated molecular chaperone. Protects both thermally unfolding and oxidatively damaged proteins from irreversible aggregation. Plays an important role in the bacterial defense system toward oxidative stress. This chain is 33 kDa chaperonin, found in Bacillus anthracis (strain A0248).